A 310-amino-acid polypeptide reads, in one-letter code: ADP-L-glycero-D-manno-heptose-6-epimerase (310 aa).

Residues 10 to 11 (FI), 31 to 32 (DN), Lys-38, Lys-53, 75 to 79 (EGACS), and Asn-92 each bind NADP(+). The active-site Proton acceptor is the Tyr-140. Residue Lys-144 participates in NADP(+) binding. Residue Asn-169 participates in substrate binding. NADP(+) contacts are provided by Val-170 and Lys-178. The active-site Proton acceptor is Lys-178. Residues Ser-180, His-187, 201-204 (FAGS), Arg-209, and Tyr-272 contribute to the substrate site.

Belongs to the NAD(P)-dependent epimerase/dehydratase family. HldD subfamily. As to quaternary structure, homopentamer. NADP(+) is required as a cofactor.

The enzyme catalyses ADP-D-glycero-beta-D-manno-heptose = ADP-L-glycero-beta-D-manno-heptose. It participates in nucleotide-sugar biosynthesis; ADP-L-glycero-beta-D-manno-heptose biosynthesis; ADP-L-glycero-beta-D-manno-heptose from D-glycero-beta-D-manno-heptose 7-phosphate: step 4/4. Functionally, catalyzes the interconversion between ADP-D-glycero-beta-D-manno-heptose and ADP-L-glycero-beta-D-manno-heptose via an epimerization at carbon 6 of the heptose. This chain is ADP-L-glycero-D-manno-heptose-6-epimerase, found in Yersinia pseudotuberculosis serotype O:1b (strain IP 31758).